A 210-amino-acid chain; its full sequence is Glutathione S-transferase P (210 aa).

Positions 2 to 81 constitute a GST N-terminal domain; the sequence is PPYTVVYFPV…HLGRTLGLYG (80 aa). Y4 carries the phosphotyrosine; by EGFR modification. Glutathione contacts are provided by residues Y8, R14, W39, K45, and 52 to 53; that span reads QL. A Phosphothreonine modification is found at T62. Residue 65–66 coordinates glutathione; sequence QS. Positions 83–204 constitute a GST C-terminal domain; sequence DQREAALVDM…ASPEHVNLPI (122 aa). K103 and K116 each carry N6-succinyllysine. The residue at position 128 (K128) is an N6-acetyllysine.

It belongs to the GST superfamily. Pi family. As to quaternary structure, homodimer. Interacts with CDK5.

It is found in the cytoplasm. It localises to the mitochondrion. Its subcellular location is the nucleus. It catalyses the reaction RX + glutathione = an S-substituted glutathione + a halide anion + H(+). The catalysed reaction is prostaglandin J2 + glutathione = prostaglandin J2-S-(R)-glutathione. The enzyme catalyses prostaglandin J2 + glutathione = prostaglandin J2-S-(S)-glutathione. It carries out the reaction prostaglandin A2 + glutathione = prostaglandin A2-S-(S)-glutathione. It catalyses the reaction 11(S)-hydroxy-14(S),15(S)-epoxy-(5Z,8Z,12E)-eicosatrienoate + glutathione = (11S,15S)-dihydroxy-14(R)-S-glutathionyl-(5Z,8Z,12E)-eicosatrienoate. In terms of biological role, conjugation of reduced glutathione to a wide number of exogenous and endogenous hydrophobic electrophiles. Involved in the formation of glutathione conjugates of both prostaglandin A2 (PGA2) and prostaglandin J2 (PGJ2). Participates in the formation of novel hepoxilin regioisomers. Negatively regulates CDK5 activity via p25/p35 translocation to prevent neurodegeneration. This is Glutathione S-transferase P (GSTP1) from Macaca mulatta (Rhesus macaque).